A 241-amino-acid polypeptide reads, in one-letter code: Small ribosomal subunit protein eS4 (241 aa).

In terms of domain architecture, S4 RNA-binding spans 37 to 99; it reads IPLGLLLRDY…ADLYLRIVPD (63 aa).

This sequence belongs to the eukaryotic ribosomal protein eS4 family.

The polypeptide is Small ribosomal subunit protein eS4 (Metallosphaera sedula (strain ATCC 51363 / DSM 5348 / JCM 9185 / NBRC 15509 / TH2)).